We begin with the raw amino-acid sequence, 164 residues long: Transcription antitermination protein NusB (164 aa).

Belongs to the NusB family.

Functionally, involved in transcription antitermination. Required for transcription of ribosomal RNA (rRNA) genes. Binds specifically to the boxA antiterminator sequence of the ribosomal RNA (rrn) operons. This is Transcription antitermination protein NusB from Chlamydia muridarum (strain MoPn / Nigg).